A 239-amino-acid polypeptide reads, in one-letter code: Major prion protein (239 aa).

Residues 1–15 form the signal peptide; that stretch reads MLVLFVATWSDLGLC. The interval 15–98 is disordered; it reads CKKRPKPGGW…NQWNKPSKPK (84 aa). Residues 16-31 form an interaction with ADGRG6 region; the sequence is KKRPKPGGWNTGGSRY. Residues 16–222 are interaction with GRB2, ERI3 and SYN1; sequence KKRPKPGGWN…ESQAYYQRGS (207 aa). 5 tandem repeats follow at residues 44-51, 52-59, 60-67, 68-75, and 76-83. The segment at 44–83 is 5 X 8 AA tandem repeats of P-H-G-G-G-W-G-Q; that stretch reads PQSGGWGQPHGGGWGQPHGGGWGQPHGGGWGQPHGGGWGQ. The span at 47–87 shows a compositional bias: gly residues; the sequence is GGWGQPHGGGWGQPHGGGWGQPHGGGWGQPHGGGWGQGGGT. Cu(2+)-binding residues include histidine 53, glycine 54, glycine 55, histidine 61, glycine 62, glycine 63, histidine 69, glycine 70, glycine 71, histidine 77, glycine 78, and glycine 79. A disulfide bridge connects residues cysteine 171 and cysteine 206. 2 N-linked (GlcNAc...) asparagine glycosylation sites follow: asparagine 173 and asparagine 189. A lipid anchor (GPI-anchor amidated serine) is attached at serine 222. The propeptide at 223–239 is removed in mature form; that stretch reads SMVLFSSPPVILLISFL.

Belongs to the prion family. As to quaternary structure, monomer and homodimer. Has a tendency to aggregate into amyloid fibrils containing a cross-beta spine, formed by a steric zipper of superposed beta-strands. Soluble oligomers may represent an intermediate stage on the path to fibril formation. Copper binding may promote oligomerization. Interacts with GRB2, APP, ERI3/PRNPIP and SYN1. Mislocalized cytosolically exposed PrP interacts with MGRN1; this interaction alters MGRN1 subcellular location and causes lysosomal enlargement. Interacts with APP. Interacts with KIAA1191. Interacts with ADGRG6.

It localises to the cell membrane. The protein resides in the golgi apparatus. Its function is as follows. Its primary physiological function is unclear. May play a role in neuronal development and synaptic plasticity. May be required for neuronal myelin sheath maintenance. May promote myelin homeostasis through acting as an agonist for ADGRG6 receptor. May play a role in iron uptake and iron homeostasis. Soluble oligomers are toxic to cultured neuroblastoma cells and induce apoptosis (in vitro). Association with GPC1 (via its heparan sulfate chains) targets PRNP to lipid rafts. Also provides Cu(2+) or Zn(2+) for the ascorbate-mediated GPC1 deaminase degradation of its heparan sulfate side chains. This chain is Major prion protein (PRNP), found in Aotus trivirgatus (Three-striped night monkey).